A 213-amino-acid polypeptide reads, in one-letter code: Large ribosomal subunit protein uL1 (213 aa).

Belongs to the universal ribosomal protein uL1 family. As to quaternary structure, part of the 50S ribosomal subunit.

Its function is as follows. Binds directly to 23S rRNA. Probably involved in E site tRNA release. Functionally, protein L1 is also a translational repressor protein, it controls the translation of its operon by binding to its mRNA. This is Large ribosomal subunit protein uL1 from Methanococcoides burtonii (strain DSM 6242 / NBRC 107633 / OCM 468 / ACE-M).